Here is a 309-residue protein sequence, read N- to C-terminus: Tagatose-6-phosphate kinase (309 aa).

The protein belongs to the carbohydrate kinase PfkB family. LacC subfamily.

It carries out the reaction D-tagatofuranose 6-phosphate + ATP = D-tagatofuranose 1,6-bisphosphate + ADP + H(+). It functions in the pathway carbohydrate metabolism; D-tagatose 6-phosphate degradation; D-glyceraldehyde 3-phosphate and glycerone phosphate from D-tagatose 6-phosphate: step 1/2. The protein is Tagatose-6-phosphate kinase of Streptococcus pyogenes serotype M2 (strain MGAS10270).